We begin with the raw amino-acid sequence, 73 residues long: uncharacterized protein (73 aa).

Positions 1–32 (MFLSSAVRKDSNGVRHLPSVQRWTPGSPPTRA) are disordered.

This is an uncharacterized protein from Frog virus 3 (isolate Goorha) (FV-3).